The following is a 227-amino-acid chain: Cytochrome c oxidase subunit 2 (227 aa).

Over 1–14 (MAYPVQLGFQDAAS) the chain is Mitochondrial intermembrane. Residues 15–45 (PIMEELLYFHDHTLMIVFLISSLVLYIISLM) form a helical membrane-spanning segment. The Mitochondrial matrix segment spans residues 46 to 59 (LTTKLMHTSTMDAQ). The chain crosses the membrane as a helical span at residues 60 to 87 (EVETVWTILPAIILILIALPSLRILYMM). The Mitochondrial intermembrane segment spans residues 88 to 227 (DEITTPSLTL…HFEEWLLSMF (140 aa)). Residues histidine 161, cysteine 196, glutamate 198, cysteine 200, histidine 204, and methionine 207 each contribute to the Cu cation site. Residue glutamate 198 coordinates Mg(2+).

The protein belongs to the cytochrome c oxidase subunit 2 family. Component of the cytochrome c oxidase (complex IV, CIV), a multisubunit enzyme composed of 14 subunits. The complex is composed of a catalytic core of 3 subunits MT-CO1, MT-CO2 and MT-CO3, encoded in the mitochondrial DNA, and 11 supernumerary subunits COX4I, COX5A, COX5B, COX6A, COX6B, COX6C, COX7A, COX7B, COX7C, COX8 and NDUFA4, which are encoded in the nuclear genome. The complex exists as a monomer or a dimer and forms supercomplexes (SCs) in the inner mitochondrial membrane with NADH-ubiquinone oxidoreductase (complex I, CI) and ubiquinol-cytochrome c oxidoreductase (cytochrome b-c1 complex, complex III, CIII), resulting in different assemblies (supercomplex SCI(1)III(2)IV(1) and megacomplex MCI(2)III(2)IV(2)). Found in a complex with TMEM177, COA6, COX18, COX20, SCO1 and SCO2. Interacts with TMEM177 in a COX20-dependent manner. Interacts with COX20. Interacts with COX16. Cu cation serves as cofactor.

It localises to the mitochondrion inner membrane. The enzyme catalyses 4 Fe(II)-[cytochrome c] + O2 + 8 H(+)(in) = 4 Fe(III)-[cytochrome c] + 2 H2O + 4 H(+)(out). Functionally, component of the cytochrome c oxidase, the last enzyme in the mitochondrial electron transport chain which drives oxidative phosphorylation. The respiratory chain contains 3 multisubunit complexes succinate dehydrogenase (complex II, CII), ubiquinol-cytochrome c oxidoreductase (cytochrome b-c1 complex, complex III, CIII) and cytochrome c oxidase (complex IV, CIV), that cooperate to transfer electrons derived from NADH and succinate to molecular oxygen, creating an electrochemical gradient over the inner membrane that drives transmembrane transport and the ATP synthase. Cytochrome c oxidase is the component of the respiratory chain that catalyzes the reduction of oxygen to water. Electrons originating from reduced cytochrome c in the intermembrane space (IMS) are transferred via the dinuclear copper A center (CU(A)) of subunit 2 and heme A of subunit 1 to the active site in subunit 1, a binuclear center (BNC) formed by heme A3 and copper B (CU(B)). The BNC reduces molecular oxygen to 2 water molecules using 4 electrons from cytochrome c in the IMS and 4 protons from the mitochondrial matrix. The polypeptide is Cytochrome c oxidase subunit 2 (MT-CO2) (Propithecus tattersalli (Golden-crowned Sifaka)).